Reading from the N-terminus, the 436-residue chain is [Pyruvate dehydrogenase (acetyl-transferring)] kinase isozyme 1, mitochondrial (436 aa).

A mitochondrion-targeting transit peptide spans 1–28; that stretch reads MRLARLLRGAALAGPGPGLRAAGFSRSF. A Phosphotyrosine; by FGFR1 modification is found at Tyr136. The Histidine kinase domain maps to 163–393; sequence YKESFGVDPV…DAVIYIKALS (231 aa). The residue at position 243 (Tyr243) is a Phosphotyrosine; by FGFR1, ABL1, FLT3 and JAK2. Tyr244 is modified (phosphotyrosine; by FGFR1). ATP-binding positions include 279-286, Asp318, 337-338, and 354-359; these read ELFKNAMR, ST, and GFGYGL. At Thr338 the chain carries Phosphothreonine. Lys405 carries the post-translational modification N6-succinyllysine.

Belongs to the PDK/BCKDK protein kinase family. As to quaternary structure, homodimer, and heterodimer with PDK2. Interacts with the pyruvate dehydrogenase complex subunit DLAT, and is part of the multimeric pyruvate dehydrogenase complex that contains multiple copies of pyruvate dehydrogenase (E1), dihydrolipoamide acetyltransferase (DLAT, E2) and lipoamide dehydrogenase (DLD, E3). Interacts with phosphoglycerate kinase PGK1; the interaction is direct, occurs under hypoxic conditions and leads to PDK1-mediated inhibition of pyruvate dehydrogenase complex activity. In terms of processing, phosphorylated by constitutively activated ABL1, FGFR1, FLT3 and JAK2 (in vitro), and this may also occur in cancer cells that express constitutively activated ABL1, FGFR1, FLT3 and JAK2. Phosphorylation at Tyr-243 and Tyr-244 strongly increases kinase activity, while phosphorylation at Tyr-136 has a lesser effect. Phosphorylated under hypoxic conditions at Thr-338 by phosphoglycerate kinase PGK1 which has an activating effect. Expressed predominantly in the heart. Detected at lower levels in liver, skeletal muscle and pancreas.

It is found in the mitochondrion matrix. The enzyme catalyses L-seryl-[pyruvate dehydrogenase E1 alpha subunit] + ATP = O-phospho-L-seryl-[pyruvate dehydrogenase E1 alpha subunit] + ADP + H(+). Activity is enhanced by binding to the pyruvate dehydrogenase subunit DLAT. Inhibited by AZD7545; this compound interferes with DLAT binding and thereby inhibits kinase activity. Inhibited by dichloroacetate and radicicol. Activated under hypoxic conditions by phosphoglycerate kinase PGK1-mediated phosphorylation at Thr-338. Its function is as follows. Kinase that plays a key role in regulation of glucose and fatty acid metabolism and homeostasis via phosphorylation of the pyruvate dehydrogenase subunits PDHA1 and PDHA2. This inhibits pyruvate dehydrogenase activity, and thereby regulates metabolite flux through the tricarboxylic acid cycle, down-regulates aerobic respiration and inhibits the formation of acetyl-coenzyme A from pyruvate. Plays an important role in cellular responses to hypoxia and is important for cell proliferation under hypoxia. The sequence is that of [Pyruvate dehydrogenase (acetyl-transferring)] kinase isozyme 1, mitochondrial (PDK1) from Homo sapiens (Human).